Here is a 134-residue protein sequence, read N- to C-terminus: uncharacterized protein (134 aa).

3 helical membrane-spanning segments follow: residues 8–28 (FTSLMLTCANIMLQMYFTVMY), 54–74 (GFQAFSALLLLLSGAWITFLL), and 113–133 (LACFAVFFFVYLFLFVSRLVD).

Belongs to the cornichon family.

The protein resides in the endoplasmic reticulum membrane. This is an uncharacterized protein from Schizosaccharomyces pombe (strain 972 / ATCC 24843) (Fission yeast).